The chain runs to 302 residues: Phosphate butyryltransferase (302 aa).

The protein belongs to the phosphate acetyltransferase and butyryltransferase family.

It carries out the reaction butanoyl-CoA + phosphate = butanoyl phosphate + CoA. It functions in the pathway lipid metabolism; butanoate metabolism. Catalyzes the conversion of butyryl-CoA through butyryl phosphate to butyrate. The protein is Phosphate butyryltransferase (ptb) of Clostridium beijerinckii (strain ATCC 51743 / NCIMB 8052) (Clostridium acetobutylicum).